Reading from the N-terminus, the 526-residue chain is Cytochrome P450 monooxygenase 253 (526 aa).

3 consecutive transmembrane segments (helical) span residues 13–33, 115–135, and 306–326; these read IASSTIGQRILLALALGLLLI, FIMAGEILTGGMLIVFTGYGK, and IGAGAETTAASLSVFMLAMTL. Residue cysteine 451 coordinates heme.

It belongs to the cytochrome P450 family. Heme is required as a cofactor.

Its subcellular location is the membrane. It functions in the pathway secondary metabolite biosynthesis. Cytochrome P450 monooxygenase that is able to use delta(6)-protoilludene as a substrate to produce delta(6)-protoilludene-8-ol. The chain is Cytochrome P450 monooxygenase 253 from Postia placenta (strain ATCC 44394 / Madison 698-R) (Brown rot fungus).